Here is a 393-residue protein sequence, read N- to C-terminus: S-adenosylmethionine synthase (393 aa).

ATP is bound at residue H16. D18 provides a ligand contact to Mg(2+). E44 lines the K(+) pocket. The L-methionine site is built by E57 and Q100. Residues 100 to 110 (QSNDIAQGVDH) are flexible loop. ATP contacts are provided by residues 167–169 (DAK), 238–239 (RF), D247, 253–254 (RK), A270, and K274. Residue D247 participates in L-methionine binding. K278 contributes to the L-methionine binding site.

The protein belongs to the AdoMet synthase family. In terms of assembly, homotetramer; dimer of dimers. Mg(2+) serves as cofactor. Requires K(+) as cofactor.

The protein localises to the cytoplasm. The catalysed reaction is L-methionine + ATP + H2O = S-adenosyl-L-methionine + phosphate + diphosphate. It participates in amino-acid biosynthesis; S-adenosyl-L-methionine biosynthesis; S-adenosyl-L-methionine from L-methionine: step 1/1. Catalyzes the formation of S-adenosylmethionine (AdoMet) from methionine and ATP. The overall synthetic reaction is composed of two sequential steps, AdoMet formation and the subsequent tripolyphosphate hydrolysis which occurs prior to release of AdoMet from the enzyme. This Polaromonas sp. (strain JS666 / ATCC BAA-500) protein is S-adenosylmethionine synthase.